The sequence spans 240 residues: tRNA (guanine-N(7)-)-methyltransferase (240 aa).

Residues Glu-71, Glu-96, Asp-123, and Asp-146 each contribute to the S-adenosyl-L-methionine site. The active site involves Asp-146. Residues Lys-150, Asp-182, and 219-222 (TKFE) contribute to the substrate site.

This sequence belongs to the class I-like SAM-binding methyltransferase superfamily. TrmB family.

The catalysed reaction is guanosine(46) in tRNA + S-adenosyl-L-methionine = N(7)-methylguanosine(46) in tRNA + S-adenosyl-L-homocysteine. It functions in the pathway tRNA modification; N(7)-methylguanine-tRNA biosynthesis. Functionally, catalyzes the formation of N(7)-methylguanine at position 46 (m7G46) in tRNA. This chain is tRNA (guanine-N(7)-)-methyltransferase, found in Hydrogenovibrio crunogenus (strain DSM 25203 / XCL-2) (Thiomicrospira crunogena).